Consider the following 253-residue polypeptide: Phosphate import ATP-binding protein PstB 3 (253 aa).

Residues 8–248 (LVINNLDLYY…PQDERTENYI (241 aa)) form the ABC transporter domain. Residue 40–47 (GPSGCGKS) coordinates ATP.

Belongs to the ABC transporter superfamily. Phosphate importer (TC 3.A.1.7) family. In terms of assembly, the complex is composed of two ATP-binding proteins (PstB), two transmembrane proteins (PstC and PstA) and a solute-binding protein (PstS).

It is found in the cell membrane. The catalysed reaction is phosphate(out) + ATP + H2O = ADP + 2 phosphate(in) + H(+). In terms of biological role, part of the ABC transporter complex PstSACB involved in phosphate import. Responsible for energy coupling to the transport system. This is Phosphate import ATP-binding protein PstB 3 from Streptococcus agalactiae serotype III (strain NEM316).